Reading from the N-terminus, the 182-residue chain is Bifunctional dihydrofolate reductase-thymidylate synthase (182 aa).

A DHFR domain is found at 1-182 (AICACCKVLN…YFTRINNAYT (182 aa)). 25–31 (GLGNAGG) serves as a coordination point for NADP(+). D40 contacts substrate. NADP(+) is bound by residues 93-95 (KTS) and 114-117 (LSRT). 3 residues coordinate substrate: I154, Y160, and T175. 155 to 162 (GGASVYKE) serves as a coordination point for NADP(+).

This sequence in the N-terminal section; belongs to the dihydrofolate reductase family. It in the C-terminal section; belongs to the thymidylate synthase family. In terms of assembly, homodimer.

It catalyses the reaction (6S)-5,6,7,8-tetrahydrofolate + NADP(+) = 7,8-dihydrofolate + NADPH + H(+). The enzyme catalyses dUMP + (6R)-5,10-methylene-5,6,7,8-tetrahydrofolate = 7,8-dihydrofolate + dTMP. It functions in the pathway cofactor biosynthesis; tetrahydrofolate biosynthesis; 5,6,7,8-tetrahydrofolate from 7,8-dihydrofolate: step 1/1. Its function is as follows. Bifunctional enzyme. Involved in de novo dTMP biosynthesis. Key enzyme in folate metabolism. Catalyzes an essential reaction for de novo glycine and purine synthesis, DNA precursor synthesis, and for the conversion of dUMP to dTMP. In Plasmodium vinckei, this protein is Bifunctional dihydrofolate reductase-thymidylate synthase.